The chain runs to 166 residues: ATP synthase subunit b (166 aa).

The chain crosses the membrane as a helical span at residues 15 to 37; that stretch reads TLYYLLIFAALLLLVKHFAWGPV.

It belongs to the ATPase B chain family. As to quaternary structure, F-type ATPases have 2 components, F(1) - the catalytic core - and F(0) - the membrane proton channel. F(1) has five subunits: alpha(3), beta(3), gamma(1), delta(1), epsilon(1). F(0) has three main subunits: a(1), b(2) and c(10-14). The alpha and beta chains form an alternating ring which encloses part of the gamma chain. F(1) is attached to F(0) by a central stalk formed by the gamma and epsilon chains, while a peripheral stalk is formed by the delta and b chains.

The protein localises to the cell membrane. Functionally, f(1)F(0) ATP synthase produces ATP from ADP in the presence of a proton or sodium gradient. F-type ATPases consist of two structural domains, F(1) containing the extramembraneous catalytic core and F(0) containing the membrane proton channel, linked together by a central stalk and a peripheral stalk. During catalysis, ATP synthesis in the catalytic domain of F(1) is coupled via a rotary mechanism of the central stalk subunits to proton translocation. Its function is as follows. Component of the F(0) channel, it forms part of the peripheral stalk, linking F(1) to F(0). The sequence is that of ATP synthase subunit b from Lactobacillus gasseri (strain ATCC 33323 / DSM 20243 / BCRC 14619 / CIP 102991 / JCM 1131 / KCTC 3163 / NCIMB 11718 / NCTC 13722 / AM63).